The following is a 420-amino-acid chain: rRNA methyltransferase 3, mitochondrial (420 aa).

Residues 1-40 (MAALVRPARFVVRPLLQVVQAWDLDARRWVRALRRSPVKV) constitute a mitochondrion transit peptide. The segment at 49-88 (EQKRAPGKQPRKAPSEASAQEQREKQPLEESASRAPSTWE) is disordered. A compositionally biased stretch (basic and acidic residues) spans 69 to 80 (EQREKQPLEESA). S-adenosyl-L-methionine-binding residues include glycine 356, isoleucine 380, and leucine 389.

This sequence belongs to the class IV-like SAM-binding methyltransferase superfamily. RNA methyltransferase TrmH family. In terms of tissue distribution, expressed at same level in normal liver and hepatocarcinoma.

It is found in the mitochondrion. The catalysed reaction is guanosine(1370) in 16S rRNA + S-adenosyl-L-methionine = 2'-O-methylguanosine(1370) in 16S rRNA + S-adenosyl-L-homocysteine + H(+). Functionally, S-adenosyl-L-methionine-dependent 2'-O-ribose methyltransferase that catalyzes the formation of 2'-O-methylguanosine at position 1370 (Gm1370) in the 16S mitochondrial large subunit ribosomal RNA (mtLSU rRNA), a conserved modification in the peptidyl transferase domain of the mtLSU rRNA. Also required for formation of 2'-O-methyluridine at position 1369 (Um1369) mediated by MRM2. The chain is rRNA methyltransferase 3, mitochondrial from Homo sapiens (Human).